The primary structure comprises 517 residues: Endoglucanase A (517 aa).

Residues 1-25 form the signal peptide; sequence MKRSLLKTCSIIAGATIIFSSLSIS. The active-site Proton donor is E185. The Nucleophile role is filled by E309. Positions 382–392 are enriched in basic and acidic residues; sequence HPEATEDDKPS. Residues 382–424 are disordered; the sequence is HPEATEDDKPSTDVTNPDSGNTKPDSGNTNPGTETTTPTDNEK. Over residues 393-407 the composition is skewed to polar residues; the sequence is TDVTNPDSGNTKPDS. Residues 408 to 420 are compositionally biased toward low complexity; it reads GNTNPGTETTTPT. The region spanning 416-517 is the CBM2 domain; sequence TTTPTDNEKI…VISNFEYKFD (102 aa).

It belongs to the glycosyl hydrolase 5 (cellulase A) family.

It carries out the reaction Endohydrolysis of (1-&gt;4)-beta-D-glucosidic linkages in cellulose, lichenin and cereal beta-D-glucans.. Its function is as follows. Hydrolyzes barley beta-glucan, lichenan, carboxymethylcellulose and xylan. It shows preferential activity against the larger cellooligosaccharides (cellohexaose and cellopentaose); cellotetraose is the smallest substrate degraded completely. The polypeptide is Endoglucanase A (celA) (Clostridium longisporum).